A 144-amino-acid polypeptide reads, in one-letter code: Large ribosomal subunit protein uL15 (144 aa).

Positions 1–59 (MRLNTISPAEGSKPTGKRSGRGIGSGLGKTGGVGHKGQKSRSGGRVKPGFEGGQMPIQR) are disordered. The segment covering 21–35 (RGIGSGLGKTGGVGH) has biased composition (gly residues).

Belongs to the universal ribosomal protein uL15 family. Part of the 50S ribosomal subunit.

Functionally, binds to the 23S rRNA. The chain is Large ribosomal subunit protein uL15 from Alteromonas mediterranea (strain DSM 17117 / CIP 110805 / LMG 28347 / Deep ecotype).